The following is a 430-amino-acid chain: Adenylosuccinate synthetase (430 aa).

GTP-binding positions include Gly-12 to Lys-18 and Gly-40 to Thr-42. Residue Asp-13 is the Proton acceptor of the active site. Mg(2+)-binding residues include Asp-13 and Gly-40. IMP-binding positions include Asp-13–Lys-16, Asn-38–His-41, Thr-129, Arg-143, Gln-224, Thr-239, and Arg-303. His-41 serves as the catalytic Proton donor. Ala-299–Arg-305 contributes to the substrate binding site. GTP contacts are provided by residues Arg-305, Lys-331–Asp-333, and Ser-413–Gly-415.

It belongs to the adenylosuccinate synthetase family. Homodimer. It depends on Mg(2+) as a cofactor.

It localises to the cytoplasm. The catalysed reaction is IMP + L-aspartate + GTP = N(6)-(1,2-dicarboxyethyl)-AMP + GDP + phosphate + 2 H(+). Its pathway is purine metabolism; AMP biosynthesis via de novo pathway; AMP from IMP: step 1/2. In terms of biological role, plays an important role in the de novo pathway of purine nucleotide biosynthesis. Catalyzes the first committed step in the biosynthesis of AMP from IMP. This is Adenylosuccinate synthetase from Desulfatibacillum aliphaticivorans.